We begin with the raw amino-acid sequence, 283 residues long: MPELPEVETVMRGLQPSMEGVVIARADVNRPDLRWPFPDRMTERLSGRRVLSMRRRSKYILADLDSGETLLVHLGMSGRMTVSGDPLGQFVHSHPQLEKHDHVVFHMDNGARVTFNDPRRFGAMDLLETAKADSHKLLAVLGPEPLGNDFHESHLVSAFKGRRTPVKSALLDQGIIAGLGNIYVCEALFRAGISPRREAGKISTSRVTSLVPIIRQVLQDAIAAGGSSLKDFRQANGELGYFQHTFDVYGREGEPCRRAGCTGTVTRITQSGRSSFYCGKCQR.

The active-site Schiff-base intermediate with DNA is the Pro-2. Residue Glu-3 is the Proton donor of the active site. The active-site Proton donor; for beta-elimination activity is Lys-58. The DNA site is built by His-100, Arg-119, and Arg-162. The segment at 247 to 283 (DVYGREGEPCRRAGCTGTVTRITQSGRSSFYCGKCQR) adopts an FPG-type zinc-finger fold. The active-site Proton donor; for delta-elimination activity is the Arg-273.

This sequence belongs to the FPG family. In terms of assembly, monomer. The cofactor is Zn(2+).

The catalysed reaction is Hydrolysis of DNA containing ring-opened 7-methylguanine residues, releasing 2,6-diamino-4-hydroxy-5-(N-methyl)formamidopyrimidine.. It catalyses the reaction 2'-deoxyribonucleotide-(2'-deoxyribose 5'-phosphate)-2'-deoxyribonucleotide-DNA = a 3'-end 2'-deoxyribonucleotide-(2,3-dehydro-2,3-deoxyribose 5'-phosphate)-DNA + a 5'-end 5'-phospho-2'-deoxyribonucleoside-DNA + H(+). Its function is as follows. Involved in base excision repair of DNA damaged by oxidation or by mutagenic agents. Acts as a DNA glycosylase that recognizes and removes damaged bases. Has a preference for oxidized purines, such as 7,8-dihydro-8-oxoguanine (8-oxoG). Has AP (apurinic/apyrimidinic) lyase activity and introduces nicks in the DNA strand. Cleaves the DNA backbone by beta-delta elimination to generate a single-strand break at the site of the removed base with both 3'- and 5'-phosphates. The polypeptide is Formamidopyrimidine-DNA glycosylase (Ruegeria sp. (strain TM1040) (Silicibacter sp.)).